A 147-amino-acid chain; its full sequence is Prefoldin subunit alpha (147 aa).

Belongs to the prefoldin alpha subunit family. Heterohexamer of two alpha and four beta subunits.

It localises to the cytoplasm. Its function is as follows. Molecular chaperone capable of stabilizing a range of proteins. Seems to fulfill an ATP-independent, HSP70-like function in archaeal de novo protein folding. In Saccharolobus islandicus (strain L.S.2.15 / Lassen #1) (Sulfolobus islandicus), this protein is Prefoldin subunit alpha.